A 224-amino-acid chain; its full sequence is Lipoprotein-releasing system ATP-binding protein LolD (224 aa).

In terms of domain architecture, ABC transporter spans 4–224 (LSIRNVFKSY…RLAGGEVSEA (221 aa)). 40–47 (GASGAGKS) is a binding site for ATP.

This sequence belongs to the ABC transporter superfamily. Lipoprotein translocase (TC 3.A.1.125) family. In terms of assembly, the complex is composed of two ATP-binding proteins (LolD) and two transmembrane proteins (LolC and LolE).

The protein resides in the cell inner membrane. Part of the ABC transporter complex LolCDE involved in the translocation of mature outer membrane-directed lipoproteins, from the inner membrane to the periplasmic chaperone, LolA. Responsible for the formation of the LolA-lipoprotein complex in an ATP-dependent manner. This chain is Lipoprotein-releasing system ATP-binding protein LolD, found in Myxococcus xanthus (strain DK1622).